We begin with the raw amino-acid sequence, 529 residues long: Bifunctional purine biosynthesis protein PurH (529 aa).

The region spanning 1 to 148 (MQQRRPVRRA…KNHKDVAIVV (148 aa)) is the MGS-like domain. K287 carries the post-translational modification N6-acetyllysine.

Belongs to the PurH family.

The enzyme catalyses (6R)-10-formyltetrahydrofolate + 5-amino-1-(5-phospho-beta-D-ribosyl)imidazole-4-carboxamide = 5-formamido-1-(5-phospho-D-ribosyl)imidazole-4-carboxamide + (6S)-5,6,7,8-tetrahydrofolate. The catalysed reaction is IMP + H2O = 5-formamido-1-(5-phospho-D-ribosyl)imidazole-4-carboxamide. Its pathway is purine metabolism; IMP biosynthesis via de novo pathway; 5-formamido-1-(5-phospho-D-ribosyl)imidazole-4-carboxamide from 5-amino-1-(5-phospho-D-ribosyl)imidazole-4-carboxamide (10-formyl THF route): step 1/1. It functions in the pathway purine metabolism; IMP biosynthesis via de novo pathway; IMP from 5-formamido-1-(5-phospho-D-ribosyl)imidazole-4-carboxamide: step 1/1. The polypeptide is Bifunctional purine biosynthesis protein PurH (Escherichia fergusonii (strain ATCC 35469 / DSM 13698 / CCUG 18766 / IAM 14443 / JCM 21226 / LMG 7866 / NBRC 102419 / NCTC 12128 / CDC 0568-73)).